Here is a 334-residue protein sequence, read N- to C-terminus: Protein-methionine-sulfoxide reductase catalytic subunit MsrP (334 aa).

The segment at residues 1–44 is a signal peptide (tat-type signal); that stretch reads MKKIRPLTEADVTAESAFFMQRRQVLKALGISAAALSLPSTAQA. Mo-molybdopterin is bound by residues Asn-88, 91 to 92, Cys-146, Thr-181, Asn-233, Arg-238, and 249 to 251; these read YE and GIK.

It belongs to the MsrP family. Heterodimer of a catalytic subunit (MsrP) and a heme-binding subunit (MsrQ). The cofactor is Mo-molybdopterin. Predicted to be exported by the Tat system. The position of the signal peptide cleavage has not been experimentally proven.

It is found in the periplasm. The enzyme catalyses L-methionyl-[protein] + a quinone + H2O = L-methionyl-(S)-S-oxide-[protein] + a quinol. It carries out the reaction L-methionyl-[protein] + a quinone + H2O = L-methionyl-(R)-S-oxide-[protein] + a quinol. Functionally, part of the MsrPQ system that repairs oxidized periplasmic proteins containing methionine sulfoxide residues (Met-O), using respiratory chain electrons. Thus protects these proteins from oxidative-stress damage caused by reactive species of oxygen and chlorine generated by the host defense mechanisms. MsrPQ is essential for the maintenance of envelope integrity under bleach stress, rescuing a wide series of structurally unrelated periplasmic proteins from methionine oxidation, including the primary periplasmic chaperone SurA and the lipoprotein Pal. The catalytic subunit MsrP is non-stereospecific, being able to reduce both (R-) and (S-) diastereoisomers of methionine sulfoxide. The sequence is that of Protein-methionine-sulfoxide reductase catalytic subunit MsrP from Salmonella newport (strain SL254).